Consider the following 438-residue polypeptide: tRNA(Ile)-lysidine synthase (438 aa).

26 to 31 is an ATP binding site; that stretch reads SGGADS.

The protein belongs to the tRNA(Ile)-lysidine synthase family.

It is found in the cytoplasm. It catalyses the reaction cytidine(34) in tRNA(Ile2) + L-lysine + ATP = lysidine(34) in tRNA(Ile2) + AMP + diphosphate + H(+). Its function is as follows. Ligates lysine onto the cytidine present at position 34 of the AUA codon-specific tRNA(Ile) that contains the anticodon CAU, in an ATP-dependent manner. Cytidine is converted to lysidine, thus changing the amino acid specificity of the tRNA from methionine to isoleucine. In Parabacteroides distasonis (strain ATCC 8503 / DSM 20701 / CIP 104284 / JCM 5825 / NCTC 11152), this protein is tRNA(Ile)-lysidine synthase.